A 122-amino-acid chain; its full sequence is Large ribosomal subunit protein uL14c (122 aa).

This sequence belongs to the universal ribosomal protein uL14 family. In terms of assembly, part of the 50S ribosomal subunit.

The protein localises to the plastid. Its subcellular location is the chloroplast. Functionally, binds to 23S rRNA. This chain is Large ribosomal subunit protein uL14c, found in Fagopyrum esculentum subsp. ancestrale (Wild buckwheat).